A 343-amino-acid polypeptide reads, in one-letter code: Heat-inducible transcription repressor HrcA (343 aa).

It belongs to the HrcA family.

Negative regulator of class I heat shock genes (grpE-dnaK-dnaJ and groELS operons). Prevents heat-shock induction of these operons. The sequence is that of Heat-inducible transcription repressor HrcA from Mycolicibacterium smegmatis (strain ATCC 700084 / mc(2)155) (Mycobacterium smegmatis).